The primary structure comprises 98 residues: NADH-ubiquinone oxidoreductase chain 4L (98 aa).

The next 3 membrane-spanning stretches (helical) occupy residues 1–21 (MPPIYMNIILAFTLSLMGMLV), 29–49 (SLLCLEGMMLSLFILGTTMAL), and 61–81 (IVLLVFAACEAAVGLSLLVMV).

It belongs to the complex I subunit 4L family. Core subunit of respiratory chain NADH dehydrogenase (Complex I) which is composed of 45 different subunits.

Its subcellular location is the mitochondrion inner membrane. It catalyses the reaction a ubiquinone + NADH + 5 H(+)(in) = a ubiquinol + NAD(+) + 4 H(+)(out). Core subunit of the mitochondrial membrane respiratory chain NADH dehydrogenase (Complex I) which catalyzes electron transfer from NADH through the respiratory chain, using ubiquinone as an electron acceptor. Part of the enzyme membrane arm which is embedded in the lipid bilayer and involved in proton translocation. This Orycteropus afer (Aardvark) protein is NADH-ubiquinone oxidoreductase chain 4L (MT-ND4L).